The primary structure comprises 347 residues: Farnesyl pyrophosphate synthase (347 aa).

The isopentenyl diphosphate site is built by Lys-50, Arg-53, and Gln-88. Mg(2+) contacts are provided by Asp-95 and Asp-99. Arg-104 contacts dimethylallyl diphosphate. Arg-105 provides a ligand contact to isopentenyl diphosphate. Dimethylallyl diphosphate is bound by residues Lys-192, Thr-193, Gln-232, Lys-249, and Lys-258.

This sequence belongs to the FPP/GGPP synthase family. In terms of assembly, interacts with spo9. Requires Mg(2+) as cofactor.

Its subcellular location is the cytoplasm. It localises to the nucleus. The catalysed reaction is isopentenyl diphosphate + dimethylallyl diphosphate = (2E)-geranyl diphosphate + diphosphate. It catalyses the reaction isopentenyl diphosphate + (2E)-geranyl diphosphate = (2E,6E)-farnesyl diphosphate + diphosphate. Its pathway is isoprenoid biosynthesis; farnesyl diphosphate biosynthesis; farnesyl diphosphate from geranyl diphosphate and isopentenyl diphosphate: step 1/1. The protein operates within isoprenoid biosynthesis; geranyl diphosphate biosynthesis; geranyl diphosphate from dimethylallyl diphosphate and isopentenyl diphosphate: step 1/1. Functionally, farnesyl pyrophosphate synthase; part of the second module of ergosterol biosynthesis pathway that includes the middle steps of the pathway. Fps1 catalyzes the sequential condensation of isopentenyl pyrophosphate with dimethylallyl pyrophosphate, and then with the resultant geranylpyrophosphate to the ultimate product farnesyl pyrophosphate. The second module is carried out in the vacuole and involves the formation of farnesyl diphosphate, which is also an important intermediate in the biosynthesis of ubiquinone, dolichol, heme and prenylated proteins. Activity by the mevalonate kinase erg12 first converts mevalonate into 5-phosphomevalonate. 5-phosphomevalonate is then further converted to 5-diphosphomevalonate by the phosphomevalonate kinase erg8. The diphosphomevalonate decarboxylase mvd1 then produces isopentenyl diphosphate. The isopentenyl-diphosphate delta-isomerase idi1 then catalyzes the 1,3-allylic rearrangement of the homoallylic substrate isopentenyl (IPP) to its highly electrophilic allylic isomer, dimethylallyl diphosphate (DMAPP). Finally the farnesyl diphosphate synthase fps1 catalyzes the sequential condensation of isopentenyl pyrophosphate with dimethylallyl pyrophosphate, and then with the resultant geranylpyrophosphate to the ultimate product farnesyl pyrophosphate. This chain is Farnesyl pyrophosphate synthase, found in Schizosaccharomyces pombe (strain 972 / ATCC 24843) (Fission yeast).